The following is a 400-amino-acid chain: Ubiquitin-like modifier-activating enzyme 5 (400 aa).

ATP contacts are provided by Gly76, Asp97, Lys120, Asn143, and Asn177. Zn(2+) is bound by residues Cys219 and Cys222. Residue Cys243 is the Glycyl thioester intermediate of the active site. Positions 296 and 301 each coordinate Zn(2+).

The protein belongs to the ubiquitin-activating E1 family. UBA5 subfamily.

Functionally, E1-like enzyme which activates UFM1. This is Ubiquitin-like modifier-activating enzyme 5 from Drosophila virilis (Fruit fly).